The sequence spans 469 residues: Phenylalanine--tRNA ligase alpha subunit (469 aa).

Residues Thr-309, 348–350 (QLD), and Phe-388 each bind L-phenylalanine. Glu-390 serves as a coordination point for Mg(2+).

The protein belongs to the class-II aminoacyl-tRNA synthetase family. Phe-tRNA synthetase alpha subunit type 2 subfamily. As to quaternary structure, tetramer of two alpha and two beta subunits. Mg(2+) serves as cofactor.

The protein localises to the cytoplasm. The enzyme catalyses tRNA(Phe) + L-phenylalanine + ATP = L-phenylalanyl-tRNA(Phe) + AMP + diphosphate + H(+). This chain is Phenylalanine--tRNA ligase alpha subunit, found in Sulfurisphaera tokodaii (strain DSM 16993 / JCM 10545 / NBRC 100140 / 7) (Sulfolobus tokodaii).